A 125-amino-acid chain; its full sequence is MAPAKKGGEKKKGRSAINEVVTREYTINIHKRIHGVGFKKRAPRALKEIRKFAMKEMGTPDVRIDTRLNKAVWAKGIRNVPYRIRVRLSRKRNEDEDSPNKLYTLVTYVPVTTFKNLQTVNVDGN.

N-acetylmethionine is present on Met1. Ser15 carries the phosphoserine modification. N6-succinyllysine is present on residues Lys55 and Lys70. Position 75 is an N6-acetyllysine; alternate (Lys75). Lys75 is subject to N6-succinyllysine; alternate. Ser98 is modified (phosphoserine).

This sequence belongs to the eukaryotic ribosomal protein eL31 family. As to quaternary structure, component of the large ribosomal subunit.

It localises to the cytoplasm. Its function is as follows. Component of the large ribosomal subunit. The ribosome is a large ribonucleoprotein complex responsible for the synthesis of proteins in the cell. In Pongo abelii (Sumatran orangutan), this protein is Large ribosomal subunit protein eL31 (RPL31).